The primary structure comprises 80 residues: UPF0291 protein YlaC (80 aa).

Belongs to the UPF0291 family.

It is found in the cytoplasm. The protein is UPF0291 protein YlaC (ylcA) of Lactococcus lactis subsp. lactis (strain IL1403) (Streptococcus lactis).